The primary structure comprises 391 residues: Carbamoyl phosphate synthase small chain (391 aa).

Residues 1 to 187 form a CPSase region; the sequence is MAGVKERAVL…PLPYAWPTLK (187 aa). The L-glutamine site is built by Ser50, Gly239, and Gly241. The 186-residue stretch at 191-376 folds into the Glutamine amidotransferase type-1 domain; it reads RIVVMDFGIK…LEEVEAFHGA (186 aa). The active-site Nucleophile is Cys266. L-glutamine-binding residues include Leu267, Gln270, Asn308, Gly310, and Tyr311. Active-site residues include His349 and Glu351.

This sequence belongs to the CarA family. As to quaternary structure, composed of two chains; the small (or glutamine) chain promotes the hydrolysis of glutamine to ammonia, which is used by the large (or ammonia) chain to synthesize carbamoyl phosphate. Tetramer of heterodimers (alpha,beta)4.

The enzyme catalyses hydrogencarbonate + L-glutamine + 2 ATP + H2O = carbamoyl phosphate + L-glutamate + 2 ADP + phosphate + 2 H(+). It catalyses the reaction L-glutamine + H2O = L-glutamate + NH4(+). The protein operates within amino-acid biosynthesis; L-arginine biosynthesis; carbamoyl phosphate from bicarbonate: step 1/1. It functions in the pathway pyrimidine metabolism; UMP biosynthesis via de novo pathway; (S)-dihydroorotate from bicarbonate: step 1/3. Small subunit of the glutamine-dependent carbamoyl phosphate synthetase (CPSase). CPSase catalyzes the formation of carbamoyl phosphate from the ammonia moiety of glutamine, carbonate, and phosphate donated by ATP, constituting the first step of 2 biosynthetic pathways, one leading to arginine and/or urea and the other to pyrimidine nucleotides. The small subunit (glutamine amidotransferase) binds and cleaves glutamine to supply the large subunit with the substrate ammonia. This chain is Carbamoyl phosphate synthase small chain, found in Thermus thermophilus (strain ATCC BAA-163 / DSM 7039 / HB27).